A 152-amino-acid chain; its full sequence is Superoxide dismutase [Cu-Zn] 1 (152 aa).

Cu cation contacts are provided by histidine 45, histidine 47, and histidine 62. A disulfide bridge links cysteine 56 with cysteine 145. Zn(2+) is bound by residues histidine 62, histidine 70, histidine 79, and aspartate 82. Histidine 119 is a binding site for Cu cation.

The protein belongs to the Cu-Zn superoxide dismutase family. Homodimer. Interacts with DJ1A and CCS. Cu cation is required as a cofactor. The cofactor is Zn(2+). Expressed in leaves (at protein level). The spatial localization is regulated by miR398-mediated silencing. Mostly present in flowers, old rosette leaves and inflorescence, and, to a lower extent, in cauline leaves, stems and roots.

Its subcellular location is the cytoplasm. The protein resides in the cytosol. It is found in the nucleus. It catalyses the reaction 2 superoxide + 2 H(+) = H2O2 + O2. Destroys radicals which are normally produced within the cells and which are toxic to biological systems. The chain is Superoxide dismutase [Cu-Zn] 1 (CSD1) from Arabidopsis thaliana (Mouse-ear cress).